The sequence spans 62 residues: Beta-defensin 37 (62 aa).

The N-terminal stretch at Met1 to Phe16 is a signal peptide. 3 disulfides stabilise this stretch: Cys29–Cys58, Cys36–Cys51, and Cys41–Cys59.

This sequence belongs to the beta-defensin family. Only expressed in epididymis (corpus and cauda).

It localises to the secreted. Functionally, has antibacterial activity. The sequence is that of Beta-defensin 37 (Defb37) from Mus musculus (Mouse).